We begin with the raw amino-acid sequence, 883 residues long: Phosphoenolpyruvate carboxylase (883 aa).

Residues His138 and Lys546 contribute to the active site.

It belongs to the PEPCase type 1 family. Homotetramer. Mg(2+) serves as cofactor.

It carries out the reaction oxaloacetate + phosphate = phosphoenolpyruvate + hydrogencarbonate. Its activity is regulated as follows. The enzyme has distinct binding sites for each of the allosteric effectors such as acetyl-CoA, fructose 1,6-bisphosphate, guanosine 3'-diphosphate 5'-diphosphate, long chain fatty acids, and L-aspartate. Functionally, forms oxaloacetate, a four-carbon dicarboxylic acid source for the tricarboxylic acid cycle. The chain is Phosphoenolpyruvate carboxylase from Escherichia coli O157:H7.